Reading from the N-terminus, the 349-residue chain is Draxin (349 aa).

The signal sequence occupies residues Met1 to Ala25. Disordered stretches follow at residues Pro38–Ala79, Pro118–Arg145, and Asp244–Pro273. Basic and acidic residues predominate over residues Pro120–Arg131. 2 stretches are compositionally biased toward basic residues: residues Thr132–Arg145 and Ala249–Lys258. N-linked (GlcNAc...) asparagine glycosylation is present at Asn264.

This sequence belongs to the draxin family. In terms of assembly, interacts with LRP6.

It localises to the secreted. Functionally, chemorepulsive axon guidance protein required for the development of spinal cord and forebrain commissures. Acts as a chemorepulsive guidance protein for commissural axons during development. Able to inhibit or repel neurite outgrowth from dorsal spinal cord. Inhibits the stabilization of cytosolic beta-catenin (CTNNB1) via its interaction with LRP6, thereby acting as an antagonist of Wnt signaling pathway. This chain is Draxin, found in Homo sapiens (Human).